We begin with the raw amino-acid sequence, 292 residues long: Phosphoribulokinase 2 (292 aa).

12-20 (GSSGAGTST) contributes to the ATP binding site.

It belongs to the phosphoribulokinase family.

It carries out the reaction D-ribulose 5-phosphate + ATP = D-ribulose 1,5-bisphosphate + ADP + H(+). The protein operates within carbohydrate biosynthesis; Calvin cycle. The sequence is that of Phosphoribulokinase 2 (prkB) from Cereibacter sphaeroides (Rhodobacter sphaeroides).